A 374-amino-acid chain; its full sequence is Probable carboxylesterase 4, mitochondrial (374 aa).

The N-terminal 52 residues, 1 to 52 (MLRRITCSSSLASPSLFLRFFRQLPRSYSSPTTIAVSGRNIRRLSTPTTLRC), are a transit peptide targeting the mitochondrion. Residues 135-137 (HGG) carry the Involved in the stabilization of the negatively charged intermediate by the formation of the oxyanion hole motif. Residues Ser-219, Asp-317, and His-349 contribute to the active site.

Belongs to the 'GDXG' lipolytic enzyme family. In terms of tissue distribution, expressed in leaves, stems, flowers and siliques.

It localises to the mitochondrion. It carries out the reaction a carboxylic ester + H2O = an alcohol + a carboxylate + H(+). Carboxylesterase acting on esters with varying acyl chain length. The sequence is that of Probable carboxylesterase 4, mitochondrial (CXE4) from Arabidopsis thaliana (Mouse-ear cress).